A 209-amino-acid polypeptide reads, in one-letter code: Small ribosomal subunit protein uS4 (209 aa).

Zn(2+) contacts are provided by Cys-9, Cys-12, Cys-26, and Cys-31. A C4-type zinc finger spans residues 9-31 (CRLCRREGVKLYLKGERCYSPKC). The S4 RNA-binding domain occupies 100-162 (RLDNVVYRLG…RNLELIRQNL (63 aa)).

Belongs to the universal ribosomal protein uS4 family. In terms of assembly, part of the 30S ribosomal subunit. Contacts protein S5. The interaction surface between S4 and S5 is involved in control of translational fidelity. It depends on Zn(2+) as a cofactor.

In terms of biological role, one of the primary rRNA binding proteins, it binds directly to 16S rRNA where it helps nucleate assembly of the body and platform of the 30S subunit. In Thermus thermophilus (strain ATCC BAA-163 / DSM 7039 / HB27), this protein is Small ribosomal subunit protein uS4 (rpsD).